A 134-amino-acid chain; its full sequence is Profilin-3 (134 aa).

Cysteine 13 and cysteine 118 form a disulfide bridge. An Involved in PIP2 interaction motif is present at residues alanine 84–threonine 100. Position 114 is a phosphothreonine (threonine 114).

It belongs to the profilin family. In terms of assembly, occurs in many kinds of cells as a complex with monomeric actin in a 1:1 ratio. Phosphorylated by MAP kinases.

It localises to the cytoplasm. The protein resides in the cytoskeleton. Its function is as follows. Binds to actin and affects the structure of the cytoskeleton. At high concentrations, profilin prevents the polymerization of actin, whereas it enhances it at low concentrations. This Olea europaea (Common olive) protein is Profilin-3.